The chain runs to 242 residues: Uridylate kinase (242 aa).

Residue 17–20 (KLSG) coordinates ATP. Residue G59 coordinates UMP. G60 and R64 together coordinate ATP. UMP contacts are provided by residues D79 and 140–147 (LGNPFFTT). Positions 167, 173, and 176 each coordinate ATP.

Belongs to the UMP kinase family. As to quaternary structure, homohexamer.

It is found in the cytoplasm. The catalysed reaction is UMP + ATP = UDP + ADP. The protein operates within pyrimidine metabolism; CTP biosynthesis via de novo pathway; UDP from UMP (UMPK route): step 1/1. With respect to regulation, inhibited by UTP. In terms of biological role, catalyzes the reversible phosphorylation of UMP to UDP. This Buchnera aphidicola subsp. Baizongia pistaciae (strain Bp) protein is Uridylate kinase.